The sequence spans 424 residues: Arginine biosynthesis bifunctional protein ArgJ (424 aa).

6 residues coordinate substrate: Thr-172, Lys-198, Thr-209, Glu-296, Asn-419, and Ser-424. The Nucleophile role is filled by Thr-209.

This sequence belongs to the ArgJ family. As to quaternary structure, heterotetramer of two alpha and two beta chains.

The protein localises to the cytoplasm. The enzyme catalyses N(2)-acetyl-L-ornithine + L-glutamate = N-acetyl-L-glutamate + L-ornithine. It carries out the reaction L-glutamate + acetyl-CoA = N-acetyl-L-glutamate + CoA + H(+). It participates in amino-acid biosynthesis; L-arginine biosynthesis; L-ornithine and N-acetyl-L-glutamate from L-glutamate and N(2)-acetyl-L-ornithine (cyclic): step 1/1. It functions in the pathway amino-acid biosynthesis; L-arginine biosynthesis; N(2)-acetyl-L-ornithine from L-glutamate: step 1/4. In terms of biological role, catalyzes two activities which are involved in the cyclic version of arginine biosynthesis: the synthesis of N-acetylglutamate from glutamate and acetyl-CoA as the acetyl donor, and of ornithine by transacetylation between N(2)-acetylornithine and glutamate. This chain is Arginine biosynthesis bifunctional protein ArgJ, found in Gluconobacter oxydans (strain 621H) (Gluconobacter suboxydans).